Reading from the N-terminus, the 253-residue chain is Triosephosphate isomerase (253 aa).

9–11 (NWK) provides a ligand contact to substrate. His95 (electrophile) is an active-site residue. Glu167 acts as the Proton acceptor in catalysis. Substrate contacts are provided by residues Gly173, Ser213, and 234 to 235 (GG). Ser213 carries the post-translational modification Phosphoserine.

The protein belongs to the triosephosphate isomerase family. As to quaternary structure, homodimer.

It is found in the cytoplasm. It catalyses the reaction D-glyceraldehyde 3-phosphate = dihydroxyacetone phosphate. The protein operates within carbohydrate biosynthesis; gluconeogenesis. It participates in carbohydrate degradation; glycolysis; D-glyceraldehyde 3-phosphate from glycerone phosphate: step 1/1. Its function is as follows. Involved in the gluconeogenesis. Catalyzes stereospecifically the conversion of dihydroxyacetone phosphate (DHAP) to D-glyceraldehyde-3-phosphate (G3P). The polypeptide is Triosephosphate isomerase (Bacillus pumilus (strain SAFR-032)).